Consider the following 858-residue polypeptide: MALRLVTHFDVLEDVLPSLLTQAATTDEGDRAGVLETTYGSLRVLNIERNGNIIYTYKDNKGNAVFGLYDCQTRQNEHLYTFEKDMQAVSCSVNSERTVLAASFIQYTTEGVKNDLQPGSKCLTLLVEIHPVNNVKVLKAVDSCVWVQFLYPQAESHLLPQNHLLLISEEKYIERFHIQITREDGDRVVIRNSSHLPRDRLAEDFVWAQWDLSEQRLYYIELKESRSILKCIQFRADESFNLMFEMPLDITLTGLRFKLVNFGYDYRQDREKLCNQPSLCIFTNHTGSLCMCYSPKSDSREEITYSVFYLHKGYRKIFTAAPGSADSQVTNGADSQVTDGIAFLNLGYFVAVYSPGHFLHLLNIQHPDLVCHSLFLTGNNKIAAVLPPSPLQSLPGSLVLDCYSGKVYRVTLDQSYLLRFLWNAHLDCERMAALHCILSCSQDPGFPEEQIIQWISEHVSACHSFDLIQEFLIASSYWSVYAELDDMGMLLQYSSVLTWNTEIPGIKFTTEELPLPLMKVYGLKGYWAKLNSNLEYIKYTKPHLHYHNSVVRREWHNLISEERTGKRRSTMYVRNILENAMKVIASMETRTLEPRLIPFLQEEDRHQRLLMGLMVSELRDHLLRHLQGVEKKKIEQMVLDYISKLLDLIWCLLETSWRKHSMHPLVLHLNSHCSAADFEVFHLMTRILDAASSLCLPLPPGFHSLHTILGVHCLPLYSLLHYIDNGVLLLTETAVTRLMKDLDNSEKNEQLKFSIIVRLPPLIGQKVCRLWDHPMSSNIISRNHVARLLKNYRKEPRNSMIDKSSFPVEFLPLNYFIEILMGLESSNQALYGFEGHDNVDAEFVEEAALKHTTMLLGL.

This sequence belongs to the GSAP family. Interacts with APP; specifically interacts with the CTF-alpha product of APP. Interacts with the gamma-secretase complex. The protein is first synthesized as a holoprotein form of 98 kDa and rapidly processed into the gamma-secretase-activating protein 16 kDa C-terminal form, which constitutes the predominant form.

It localises to the golgi apparatus. The protein resides in the trans-Golgi network. Functionally, regulator of gamma-secretase activity, which specifically activates the production of amyloid-beta protein (amyloid-beta protein 40 and amyloid-beta protein 42), without affecting the cleavage of other gamma-secretase targets such has Notch. The gamma-secretase complex is an endoprotease complex that catalyzes the intramembrane cleavage of integral membrane proteins such as Notch receptors and APP (amyloid-beta precursor protein). Specifically promotes the gamma-cleavage of APP CTF-alpha (also named APP-CTF) by the gamma-secretase complex to generate amyloid-beta, while it reduces the epsilon-cleavage of APP CTF-alpha, leading to a low production of AICD. This chain is Gamma-secretase-activating protein (Gsap), found in Mus musculus (Mouse).